Reading from the N-terminus, the 238-residue chain is Ribitol-5-phosphate cytidylyltransferase 2 (238 aa).

CTP contacts are provided by residues 7–10 and 81–87; these read LAGG and GTDRNET.

Belongs to the IspD/TarI cytidylyltransferase family. TarI subfamily.

It carries out the reaction D-ribitol 5-phosphate + CTP + H(+) = CDP-L-ribitol + diphosphate. It functions in the pathway cell wall biogenesis; poly(ribitol phosphate) teichoic acid biosynthesis. In terms of biological role, catalyzes the transfer of the cytidylyl group of CTP to D-ribitol 5-phosphate. The sequence is that of Ribitol-5-phosphate cytidylyltransferase 2 from Staphylococcus aureus (strain MSSA476).